Here is a 216-residue protein sequence, read N- to C-terminus: Large ribosomal subunit protein uL1 (216 aa).

The protein belongs to the universal ribosomal protein uL1 family. Part of the 50S ribosomal subunit.

In terms of biological role, binds directly to 23S rRNA. Probably involved in E site tRNA release. Functionally, protein L1 is also a translational repressor protein, it controls the translation of its operon by binding to its mRNA. In Thermococcus kodakarensis (strain ATCC BAA-918 / JCM 12380 / KOD1) (Pyrococcus kodakaraensis (strain KOD1)), this protein is Large ribosomal subunit protein uL1.